Reading from the N-terminus, the 1286-residue chain is ABC transporter B family member 1 (1286 aa).

2 helical membrane-spanning segments follow: residues 42–62 and 93–113; these read VLMGIGSVGAFVHGCSLPLFL and FLVVGAAIWASSWAEISCWMW. Residues 44–333 form the ABC transmembrane type-1 1 domain; it reads MGIGSVGAFV…SAPSMAAFAK (290 aa). Asp139 lines the ATP pocket. A run of 2 helical transmembrane segments spans residues 166-186 and 187-207; these read LGNFIHYMATFVSGFIVGFTA and VWQLALVTLAVVPLIAVIGGI. The N-linked (GlcNAc...) asparagine glycan is linked to Asn217. Helical transmembrane passes span 277-297 and 301-321; these read ATYFVVFCCYALLLWYGGYLV and LTNGGLAIATMFAVMIGGLAL. Brassinolide is bound at residue Tyr286. Residues 368 to 604 form the ABC transporter 1 domain; that stretch reads VELKNVDFSY…GENGVYAKLI (237 aa). Residues Tyr377, Ser379, Arg380, Gly408, Lys409, Ser410, and Thr411 each contribute to the ATP site. Positions 614 to 647 are disordered; the sequence is AMSNARKSSARPSSARNSVSSPIMTRNSSYGRSP. The span at 616 to 635 shows a compositional bias: low complexity; that stretch reads SNARKSSARPSSARNSVSSP. The N-linked (GlcNAc...) asparagine glycan is linked to Asn640. The region spanning 700-988 is the ABC transmembrane type-1 2 domain; that stretch reads ALLGSVGSVI…TLTLAPDFIK (289 aa). The next 2 helical transmembrane spans lie at 705 to 725 and 745 to 765; these read VGSVICGSLSAFFAYVLSAVL and YLLIGLSSAALVFNTLQHSFW. N-linked (GlcNAc...) asparagine glycosylation occurs at Asn771. Asp793 is an ATP binding site. An N-linked (GlcNAc...) asparagine glycan is attached at Asn797. Transmembrane regions (helical) follow at residues 821–843, 845–867, 932–952, and 967–987; these read ISVIVQNTALMLVACTAGFVLQW, LALVLVAVFPVVVAATVLQKMFM, VAQFCLYASYALGLWYASWLV, and MVLMVSANGAAETLTLAPDFI. Tyr941 and Glu978 together coordinate brassinolide. An ABC transporter 2 domain is found at 1024-1260; the sequence is VELKHIDFSY…HPDGIYARMI (237 aa). ATP contacts are provided by Tyr1033, Arg1036, Gly1064, Lys1065, and Ser1066. An interaction with FKBP42/TWD1 region spans residues 1049 to 1286; it reads ARAGKTLALV…SSSRVKEDDA (238 aa).

The protein belongs to the ABC transporter superfamily. ABCB family. Multidrug resistance exporter (TC 3.A.1.201) subfamily. As to quaternary structure, interacts with 1-naphthylphthalamic acid (NPA) and FKBP42/TWD1. As to expression, ubiquitous, with high levels in peduncles. Mostly localized in young developing tissues, including meristems, as well as root and shoot apices.

It is found in the cell membrane. The catalysed reaction is (indol-3-yl)acetate(in) + ATP + H2O = (indol-3-yl)acetate(out) + ADP + phosphate + H(+). It carries out the reaction brassinolide(in) + ATP + H2O = brassinolide(out) + ADP + phosphate + H(+). It catalyses the reaction 24-epi-brassinolide(in) + ATP + H2O = 24-epi-brassinolide(out) + ADP + phosphate + H(+). The enzyme catalyses 24-epi-castasterone(in) + ATP + H2O = 24-epi-castasterone(out) + ADP + phosphate + H(+). The catalysed reaction is castasterone(in) + ATP + H2O = castasterone(out) + ADP + phosphate + H(+). Transport capacity is stimulated by the chaperone protein FKBP42/TWD1. Transport activity inhibited by 1-N-naphthylphthalamic acid (NPA), cyclopropyl propane dione (CPD), cyclosporin A, verapamil and quercetin. ATPase activity is specifically activated by bioactive brassinosteroids in a dose-dependent manner, including brassinolide (BL), 24-epiBL, 24-epicastasterone (24-epiCS) and castasterone-alkyne; BL binding leads to structural changes. Inhibited by vanadate. Brassinosteroid exporter that, in conjunction with ABCB19, supports the accumulation of exogenous brassinosteroids (BR) in the apoplast, thus promoting BR signaling initiation involving the specific receptor BRI1 and required for plant growth and stress responses. Auxin efflux transporter that acts as a negative regulator of light signaling to promote hypocotyl elongation. May contribute to the regulation of leaf position and morphology during PHOT1-mediated blue light responses involving auxin distribution, especially in low light fluence. Together with ABCB19 and in a FKBP42/TWD1-dependent manner, supports seed development by promoting stamen elongation and, to a lesser extent, anther dehiscence and pollen maturation, probably as auxin transporters. Mediates the accumulation of chlorophyll and anthocyanin, as well as the expression of genes in response to light. Participates directly in auxin efflux and thus regulates the polar (presumably basipetal) auxin transport (from root tips to root elongating zone). Also transports some auxin metabolites such as oxindoleacetic acid and indoleacetaldehyde. Involved in diverse auxin-mediated responses including gravitropism, phototropism and lateral root formation. Confers resistance to herbicides such as dicamba, pendimethalin, oryzalin, and monosodium acid methanearsonate (MSMA), but not to herbicides such as glyphosate, atrazine, bentazon and fluazifop-p-butyl. Also mediates resistance to xenobiotics such as cycloheximide and the cytokinin N6-(2-isopentenyl)adenine (2IP). The protein is ABC transporter B family member 1 of Arabidopsis thaliana (Mouse-ear cress).